Reading from the N-terminus, the 116-residue chain is Large ribosomal subunit protein bL19 (116 aa).

It belongs to the bacterial ribosomal protein bL19 family.

Its function is as follows. This protein is located at the 30S-50S ribosomal subunit interface and may play a role in the structure and function of the aminoacyl-tRNA binding site. This chain is Large ribosomal subunit protein bL19, found in Pseudomonas savastanoi pv. phaseolicola (strain 1448A / Race 6) (Pseudomonas syringae pv. phaseolicola (strain 1448A / Race 6)).